Consider the following 309-residue polypeptide: Glutaminase (309 aa).

Serine 64, asparagine 114, glutamate 160, asparagine 167, tyrosine 191, tyrosine 243, and valine 261 together coordinate substrate.

It belongs to the glutaminase family. In terms of assembly, homotetramer.

It catalyses the reaction L-glutamine + H2O = L-glutamate + NH4(+). This chain is Glutaminase, found in Methylorubrum extorquens (strain CM4 / NCIMB 13688) (Methylobacterium extorquens).